A 37-amino-acid polypeptide reads, in one-letter code: Esculentin-2HSa (37 aa).

C31 and C37 are oxidised to a cystine.

Expressed by the skin glands.

The protein resides in the secreted. Has antibacterial activity against the Gram-positive bacterium S.aureus ATCC 25923 (MIC=32 uM) and the Gram-negative bacterium E.coli ATCC 25726 (MIC=16 uM). The protein is Esculentin-2HSa of Odorrana hosii (Hose's rock frog).